A 322-amino-acid polypeptide reads, in one-letter code: Ribonuclease Z (322 aa).

Zn(2+)-binding residues include H62, H64, D66, H67, H139, D210, and H268. D66 acts as the Proton acceptor in catalysis.

The protein belongs to the RNase Z family. In terms of assembly, homodimer. It depends on Zn(2+) as a cofactor.

The catalysed reaction is Endonucleolytic cleavage of RNA, removing extra 3' nucleotides from tRNA precursor, generating 3' termini of tRNAs. A 3'-hydroxy group is left at the tRNA terminus and a 5'-phosphoryl group is left at the trailer molecule.. Functionally, zinc phosphodiesterase, which displays some tRNA 3'-processing endonuclease activity. Probably involved in tRNA maturation, by removing a 3'-trailer from precursor tRNA. This is Ribonuclease Z from Nostoc sp. (strain PCC 7120 / SAG 25.82 / UTEX 2576).